A 337-amino-acid chain; its full sequence is Cholinesterase 2 (337 aa).

Ser-99 acts as the Acyl-ester intermediate in catalysis. A disulfide bridge links Cys-153 with Cys-165. Glu-224 (charge relay system) is an active-site residue. Residue Asn-290 is glycosylated (N-linked (GlcNAc...) asparagine).

The protein belongs to the type-B carboxylesterase/lipase family.

The catalysed reaction is an acylcholine + H2O = a carboxylate + choline + H(+). The sequence is that of Cholinesterase 2 (CHE2) from Branchiostoma lanceolatum (Common lancelet).